The chain runs to 308 residues: Taste receptor type 2 member 107 (308 aa).

Residues 1-7 (MLNSAEG) lie on the Extracellular side of the membrane. A helical membrane pass occupies residues 8–28 (ILLCVVTSEAVLGVLGDTYIA). Residues 29-43 (LFNCMDYAKNKKLSK) are Cytoplasmic-facing. A helical membrane pass occupies residues 44 to 64 (IGFILIGLAISRIGVVWIIIL). Residues 65–87 (QGYIQVFFPHMLTSGNITEYITY) lie on the Extracellular side of the membrane. Asn80 carries N-linked (GlcNAc...) asparagine glycosylation. A helical membrane pass occupies residues 88 to 108 (IWVFLNHLSVWFVTNLNILYF). Residues 109–125 (LKIANFSNSVFLWLKRR) lie on the Cytoplasmic side of the membrane. The helical transmembrane segment at 126 to 146 (VNAVFIFLSGCLLTSWLLCFP) threads the bilayer. Residues 147 to 180 (QMTKILQNSKMHQRNTSWVHQRKNYFLINQSVTN) lie on the Extracellular side of the membrane. N-linked (GlcNAc...) asparagine glycosylation is found at Asn161 and Asn175. Residues 181-201 (LGIFFFIIVSLITCFLLIVFL) form a helical membrane-spanning segment. At 202–232 (WRHVRQMHSDVSGFRDHSTKVHVKAMKFLIS) the chain is on the cytoplasmic side. A helical transmembrane segment spans residues 233 to 253 (FMVFFILHFVGLSIEVLCFIL). The Extracellular segment spans residues 254-258 (PQNKL). The helical transmembrane segment at 259–279 (LFITGLTATCLYPCGHSIIVI) threads the bilayer. Residues 280-308 (LGNKQLKQASLKALQQLKCCETKGNFRVK) are Cytoplasmic-facing.

This sequence belongs to the G-protein coupled receptor T2R family.

Its subcellular location is the membrane. Functionally, putative taste receptor which may play a role in the perception of bitterness. The chain is Taste receptor type 2 member 107 from Mus musculus (Mouse).